The sequence spans 472 residues: Trigger factor (472 aa).

Residues 174–261 (GDIAVLGFKG…LKDLKTRELP (88 aa)) form the PPIase FKBP-type domain. The segment at 430–472 (ENSTLTEQAPAADDADDAEKPAAKKKPAAKKKTPAKSKTDAEA) is disordered. A compositionally biased stretch (basic residues) spans 452-464 (AKKKPAAKKKTPA).

Belongs to the FKBP-type PPIase family. Tig subfamily.

It localises to the cytoplasm. It catalyses the reaction [protein]-peptidylproline (omega=180) = [protein]-peptidylproline (omega=0). In terms of biological role, involved in protein export. Acts as a chaperone by maintaining the newly synthesized protein in an open conformation. Functions as a peptidyl-prolyl cis-trans isomerase. This chain is Trigger factor, found in Parasynechococcus marenigrum (strain WH8102).